We begin with the raw amino-acid sequence, 337 residues long: Nicotinate-nucleotide--dimethylbenzimidazole phosphoribosyltransferase (337 aa).

Catalysis depends on glutamate 305, which acts as the Proton acceptor.

It belongs to the CobT family.

The enzyme catalyses 5,6-dimethylbenzimidazole + nicotinate beta-D-ribonucleotide = alpha-ribazole 5'-phosphate + nicotinate + H(+). It participates in nucleoside biosynthesis; alpha-ribazole biosynthesis; alpha-ribazole from 5,6-dimethylbenzimidazole: step 1/2. In terms of biological role, catalyzes the synthesis of alpha-ribazole-5'-phosphate from nicotinate mononucleotide (NAMN) and 5,6-dimethylbenzimidazole (DMB). The protein is Nicotinate-nucleotide--dimethylbenzimidazole phosphoribosyltransferase of Jannaschia sp. (strain CCS1).